The chain runs to 313 residues: 2-phosphoglycerate kinase (313 aa).

The ATP-cone domain maps to 8 to 95 (SRILVKDKEY…LWRRVLKKHS (88 aa)).

This sequence belongs to the 2-phosphoglycerate kinase family. The cofactor is a divalent metal cation.

The enzyme catalyses (2R)-2-phosphoglycerate + ATP = (2R)-2,3-bisphosphoglycerate + ADP + H(+). Its pathway is thermoadapter biosynthesis; cyclic 2,3-diphosphoglycerate biosynthesis; cyclic 2,3-diphosphoglycerate from 2-phospho-D-glycerate: step 1/2. Its function is as follows. Catalyzes the phosphorylation of 2-phosphoglycerate to 2,3-diphosphoglycerate. Involved in the biosynthesis of cyclic 2,3-bisphosphoglycerate, a thermoprotectant. The protein is 2-phosphoglycerate kinase of Methanococcus maripaludis (strain C5 / ATCC BAA-1333).